We begin with the raw amino-acid sequence, 132 residues long: Small ribosomal subunit protein uS8 (132 aa).

It belongs to the universal ribosomal protein uS8 family. In terms of assembly, part of the 30S ribosomal subunit. Contacts proteins S5 and S12.

Functionally, one of the primary rRNA binding proteins, it binds directly to 16S rRNA central domain where it helps coordinate assembly of the platform of the 30S subunit. In Anaeromyxobacter sp. (strain Fw109-5), this protein is Small ribosomal subunit protein uS8.